A 530-amino-acid polypeptide reads, in one-letter code: Protein MGF 505-1R (530 aa).

The protein belongs to the asfivirus MGF 505 family.

Functionally, plays a role in virus cell tropism, and may be required for efficient virus replication in macrophages. This is Protein MGF 505-1R from African swine fever virus (isolate Tick/Malawi/Lil 20-1/1983) (ASFV).